The primary structure comprises 430 residues: Enolase (430 aa).

Gln-165 serves as a coordination point for (2R)-2-phosphoglycerate. Glu-207 functions as the Proton donor in the catalytic mechanism. Residues Asp-244, Glu-287, and Asp-314 each contribute to the Mg(2+) site. Residues Lys-339, Arg-368, Ser-369, and Lys-390 each coordinate (2R)-2-phosphoglycerate. The active-site Proton acceptor is the Lys-339.

It belongs to the enolase family. In terms of assembly, component of the RNA degradosome, a multiprotein complex involved in RNA processing and mRNA degradation. Mg(2+) serves as cofactor.

The protein localises to the cytoplasm. It localises to the secreted. The protein resides in the cell surface. The catalysed reaction is (2R)-2-phosphoglycerate = phosphoenolpyruvate + H2O. Its pathway is carbohydrate degradation; glycolysis; pyruvate from D-glyceraldehyde 3-phosphate: step 4/5. In terms of biological role, catalyzes the reversible conversion of 2-phosphoglycerate (2-PG) into phosphoenolpyruvate (PEP). It is essential for the degradation of carbohydrates via glycolysis. The sequence is that of Enolase from Xylella fastidiosa (strain 9a5c).